The following is a 121-amino-acid chain: uncharacterized protein (121 aa).

A disordered region spans residues 101 to 121 (TVVKKEDVRESPVDTFMENAT). Residues 102 to 112 (VVKKEDVRESP) are compositionally biased toward basic and acidic residues.

This is an uncharacterized protein from Schizosaccharomyces pombe (strain 972 / ATCC 24843) (Fission yeast).